We begin with the raw amino-acid sequence, 179 residues long: NADH-quinone oxidoreductase subunit B 1 (179 aa).

[4Fe-4S] cluster-binding residues include C38, C39, C104, and C133.

The protein belongs to the complex I 20 kDa subunit family. As to quaternary structure, NDH-1 is composed of 14 different subunits. Subunits NuoB, C, D, E, F, and G constitute the peripheral sector of the complex. Requires [4Fe-4S] cluster as cofactor.

The protein resides in the cell membrane. The catalysed reaction is a quinone + NADH + 5 H(+)(in) = a quinol + NAD(+) + 4 H(+)(out). Functionally, NDH-1 shuttles electrons from NADH, via FMN and iron-sulfur (Fe-S) centers, to quinones in the respiratory chain. The immediate electron acceptor for the enzyme in this species is believed to be ubiquinone. Couples the redox reaction to proton translocation (for every two electrons transferred, four hydrogen ions are translocated across the cytoplasmic membrane), and thus conserves the redox energy in a proton gradient. This chain is NADH-quinone oxidoreductase subunit B 1, found in Herpetosiphon aurantiacus (strain ATCC 23779 / DSM 785 / 114-95).